A 586-amino-acid chain; its full sequence is FAD-linked oxidoreductase orf1 (586 aa).

The first 17 residues, 1–17, serve as a signal peptide directing secretion; the sequence is MKSFATTVLLVTPGIYA. 12 N-linked (GlcNAc...) asparagine glycosylation sites follow: asparagine 29, asparagine 51, asparagine 79, asparagine 110, asparagine 146, asparagine 188, asparagine 314, asparagine 321, asparagine 358, asparagine 402, asparagine 434, and asparagine 461. Positions 124-303 constitute an FAD-binding PCMH-type domain; it reads TLGNYVSYAI…LSMTAKVHPD (180 aa).

It belongs to the oxygen-dependent FAD-linked oxidoreductase family.

The catalysed reaction is betaenone C = betaenone A. It functions in the pathway mycotoxin biosynthesis. Functionally, FAD-linked oxidoreductase; part of the gene cluster that mediates the biosynthesis of betaenones, phytotoxic polyketides involved in leaf spot disease in sugar beets. The first step of the pathway is the synthesis of dehydroprobetaenone I by the polyketide synthase bet1 and the enoyl reductase bet3 via condensation of one acetyl-CoA starter unit with 7 malonyl-CoA units and 5 methylations. The C-terminal reductase (R) domain of bet1 catalyzes the reductive release of the polyketide chain. Because bet1 lacks a designated enoylreductase (ER) domain, the required activity is provided the enoyl reductase bet3. The short-chain dehydrogenase/reductase bet4 then catalyzes reduction of dehydroprobetaenone I to probetaenone I. The cytochrome P450 monooxygenase bet2 catalyzes successive epoxidation, oxidation (resulting from epoxide opening) and hydroxylation to install a tertiary alcohol in the decaline ring to yield betaenone C from dehydroprobetaenone I and betaenone B from probetaenone I. The FAD-linked oxidoreductase (orf1) is probably responsible for the conversion of betaenone C to betaenone A via an intramolecular aldol reaction between C-1 and C-17 to form the bridged tricyclic system in betaenone A. The sequence is that of FAD-linked oxidoreductase orf1 from Neocamarosporium betae (Beet black rot fungus).